A 1064-amino-acid polypeptide reads, in one-letter code: Ribosome quality control complex subunit NEMF (1064 aa).

A Phosphothreonine modification is found at T7. Positions 296–359 (VDEFYSKIEG…LIEMNLQIVD (64 aa)) form a coiled coil. S417 carries the phosphoserine modification. The tract at residues 420–451 (EDGDGDASIENSDAEAPKGKKKKQKNKQLQKP) is disordered. Residues 438–447 (GKKKKQKNKQ) show a composition bias toward basic residues. A coiled-coil region spans residues 481–512 (AAKKTQRTVEAAEKAFKSAEKKTKQTLKEVQT). A compositionally biased stretch (acidic residues) spans 694-707 (EQLEGGDSSEEETE). Disordered regions lie at residues 694 to 718 (EQLE…DVEL) and 731 to 973 (SGRD…SLTG). Basic and acidic residues predominate over residues 731-756 (SGRDELSSEDGEAKAVTKDQEPIGEM). At S737 the chain carries Phosphoserine. Over residues 771–781 (IDLSHLQSQRP) the composition is skewed to polar residues. A compositionally biased stretch (basic and acidic residues) spans 828–839 (IEEKDKERESAV). The stretch at 858–882 (KRGQKSKMKKMKEKYKDQDDEDREL) forms a coiled coil. The segment covering 859–870 (RGQKSKMKKMKE) has biased composition (basic residues). The span at 947–959 (DDPHDDKEEHDLD) shows a compositional bias: basic and acidic residues. Residues 960–973 (QQGNEENLFDSLTG) are compositionally biased toward polar residues.

This sequence belongs to the NEMF family. In terms of assembly, component of the ribosome quality control complex (RQC), composed of the E3 ubiquitin ligase LTN1, TCF25 and NEMF associated with the 60S ribosomal subunit. The complex probably also contains VCP/p97 and its ubiquitin-binding cofactors. Interacts (via its N-terminus) with XPO1.

It localises to the cytoplasm. The protein localises to the cytosol. It is found in the nucleus. Key component of the ribosome quality control complex (RQC), a ribosome-associated complex that mediates the extraction of incompletely synthesized nascent chains from stalled ribosomes as well as their ubiquitin-mediated proteasomal degradation. Thereby, frees 60S subunit ribosomes from the stalled translation complex and prevents the accumulation of nascent polypeptide chains that are potentially toxic for the cell. Within the RQC complex, NEMF specifically binds stalled 60S ribosomal subunits by recognizing an exposed, nascent chain-conjugated tRNA moiety and promotes the recruitment of LTN1 to stalled 60S subunits. Following binding to stalled 60S ribosomal subunits, NEMF mediates CAT tailing by recruiting alanine-charged tRNA to the A-site and directing the elongation of stalled nascent chains independently of mRNA or 40S subunits, leading to non-templated C-terminal alanine extensions (CAT tails). Mainly recruits alanine-charged tRNAs, but can also other amino acid-charged tRNAs. CAT tailing is required to promote ubiquitination of stalled nascent chains by different E3 ubiquitin-protein ligases. In the canonical RQC pathway (RQC-L), CAT tailing facilitates LTN1-dependent ubiquitination by exposing lysine residues that would otherwise remain buried in the ribosomal exit tunnel. In the alternative RQC pathway (RQC-C) CAT tailing creates an C-degron mainly composed of alanine that is recognized by the CRL2(KLHDC10) and RCHY1/PIRH2 E3 ligases, leading to ubiquitination and degradation of stalled nascent chains. NEMF may also indirectly play a role in nuclear export. The protein is Ribosome quality control complex subunit NEMF of Mus musculus (Mouse).